Consider the following 116-residue polypeptide: Ribosome-binding factor A (116 aa).

This sequence belongs to the RbfA family. In terms of assembly, monomer. Binds 30S ribosomal subunits, but not 50S ribosomal subunits or 70S ribosomes.

The protein resides in the cytoplasm. Functionally, one of several proteins that assist in the late maturation steps of the functional core of the 30S ribosomal subunit. Associates with free 30S ribosomal subunits (but not with 30S subunits that are part of 70S ribosomes or polysomes). Required for efficient processing of 16S rRNA. May interact with the 5'-terminal helix region of 16S rRNA. The polypeptide is Ribosome-binding factor A (Streptococcus pneumoniae (strain ATCC 700669 / Spain 23F-1)).